A 166-amino-acid polypeptide reads, in one-letter code: Putative peptidyl-prolyl cis-trans isomerase dodo (166 aa).

One can recognise a WW domain in the interval 5–39; that stretch reads EQLPDGWEKRTSRSTGMSYYLNMYTKESQWDQPTE. Residues 32 to 53 are disordered; sequence SQWDQPTEPAKKAGGGSAGGGD. Positions 44–53 are enriched in gly residues; it reads AGGGSAGGGD. Positions 55-166 constitute a PpiC domain; it reads PDEVHCLHLL…SGLHIILRKA (112 aa).

The enzyme catalyses [protein]-peptidylproline (omega=180) = [protein]-peptidylproline (omega=0). This chain is Putative peptidyl-prolyl cis-trans isomerase dodo (dod), found in Drosophila melanogaster (Fruit fly).